The sequence spans 238 residues: Heme oxygenase (238 aa).

Residue His-17 coordinates heme b.

Belongs to the heme oxygenase family.

It is found in the plastid. Its subcellular location is the chloroplast. The enzyme catalyses heme b + 3 reduced [NADPH--hemoprotein reductase] + 3 O2 = biliverdin IXalpha + CO + Fe(2+) + 3 oxidized [NADPH--hemoprotein reductase] + 3 H2O + H(+). Its function is as follows. Catalyzes the opening of the heme ring with the release of iron. Key enzyme in the synthesis of the chromophoric part of the photosynthetic antennae. The sequence is that of Heme oxygenase (pbsA) from Pyropia yezoensis (Susabi-nori).